Reading from the N-terminus, the 61-residue chain is MTTVKFKYKGEEKEVDISKIKKVWRVGKMISFTYDDNGKTGRGAVSEKDAPKELLEKLEKK.

A disordered region spans residues 37-61 (NGKTGRGAVSEKDAPKELLEKLEKK). Basic and acidic residues predominate over residues 45–61 (VSEKDAPKELLEKLEKK).

The protein belongs to the 7 kDa DNA-binding/endoribonuclease P2 family. Monomer.

It localises to the cytoplasm. Can constrain negative DNA supercoils. May be involved in maintaining the integrity of the genome at high temperature. The sequence is that of DNA-binding protein 7a from Acidianus hospitalis (strain W1).